A 238-amino-acid polypeptide reads, in one-letter code: Aspirochlorine biosynthesis protein N (238 aa).

This sequence belongs to the asaB hydroxylase/desaturase family.

The protein operates within mycotoxin biosynthesis. Its function is as follows. Part of the gene cluster that mediates the biosynthesis of aspirochlorine (or antibiotic A30641), an unusual halogenated spiro compound with distinctive antifungal properties due to selective inhibition of protein biosynthesis, and which is also active against bacteria, viruses, and murine tumor cells. The non-ribosomal peptide synthetase (NRPS) aclP is responsible the formation of the diketopiperazine (DKP) core from the condensation of 2 phenylalanine residues. One Phe residue is tailored into chlorotyrosine by hydroxylation and chlorination, whereas the second Phe undergoes an unprecedented C-C bond cleavage to be converted into glycine. After formation of the DKP, sulfur is incorporated into the DKP by conjugation with glutathione by aclG, followed by its stepwise degradation to the thiol by aclI, aclJ and aclK, and the dithiol oxidation by aclT. In addition, oxygenases (aclB, aclC, aclL and aclO) and O-methyltransferases (aclM and aclU) act as tailoring enzymes to produce the intermediate dechloroaspirochlorine. Ultimately, chlorination of dechloroaspirochlorine by the halogenase aclH is the last step in the aspirochlorine pathway. This Aspergillus oryzae (strain ATCC 42149 / RIB 40) (Yellow koji mold) protein is Aspirochlorine biosynthesis protein N.